Reading from the N-terminus, the 338-residue chain is tRNA pseudouridine synthase D (338 aa).

Asp-79 acts as the Nucleophile in catalysis. Residues 154 to 303 enclose the TRUD domain; sequence GVPNYFGEQR…EEAWRANILY (150 aa).

The protein belongs to the pseudouridine synthase TruD family.

The enzyme catalyses uridine(13) in tRNA = pseudouridine(13) in tRNA. Functionally, responsible for synthesis of pseudouridine from uracil-13 in transfer RNAs. This is tRNA pseudouridine synthase D from Legionella pneumophila (strain Corby).